Consider the following 420-residue polypeptide: D-tagatose-1,6-bisphosphate aldolase subunit GatZ (420 aa).

It belongs to the GatZ/KbaZ family. GatZ subfamily. In terms of assembly, forms a complex with GatY.

It functions in the pathway carbohydrate metabolism; D-tagatose 6-phosphate degradation; D-glyceraldehyde 3-phosphate and glycerone phosphate from D-tagatose 6-phosphate: step 2/2. Its function is as follows. Component of the tagatose-1,6-bisphosphate aldolase GatYZ that is required for full activity and stability of the Y subunit. Could have a chaperone-like function for the proper and stable folding of GatY. When expressed alone, GatZ does not show any aldolase activity. Is involved in the catabolism of galactitol. The sequence is that of D-tagatose-1,6-bisphosphate aldolase subunit GatZ from Escherichia coli O9:H4 (strain HS).